Consider the following 37-residue polypeptide: Large ribosomal subunit protein bL36 (37 aa).

Belongs to the bacterial ribosomal protein bL36 family.

The sequence is that of Large ribosomal subunit protein bL36 from Listeria innocua serovar 6a (strain ATCC BAA-680 / CLIP 11262).